Reading from the N-terminus, the 321-residue chain is Phosphatidylglycerol phospholipase C (321 aa).

Positions valine 2–cysteine 251 constitute a GP-PDE domain. Residues tryptophan 297–leucine 315 form a helical; Anchor for type IV membrane protein membrane-spanning segment.

Belongs to the glycerophosphoryl diester phosphodiesterase family.

The protein localises to the mitochondrion membrane. Its subcellular location is the lipid droplet. It carries out the reaction a 1,2-diacyl-sn-glycero-3-phospho-(1'-sn-glycerol) + H2O = sn-glycerol 3-phosphate + a 1,2-diacyl-sn-glycerol + H(+). Functionally, phosphatidylglycerol phospholipase required for the removal of excess phosphatidylglycerol (PG) via a phospholipase C-type degradation mechanism. The protein is Phosphatidylglycerol phospholipase C (PGC1) of Saccharomyces cerevisiae (strain ATCC 204508 / S288c) (Baker's yeast).